The chain runs to 419 residues: Dual specificity mitogen-activated protein kinase kinase 7 (419 aa).

A2 bears the N-acetylalanine mark. The stretch at 2–30 (AASSLEQKLSRLEAKLKQENREARRRIDL) forms a coiled coil. Basic and acidic residues predominate over residues 18–30 (KQENREARRRIDL). The disordered stretch occupies residues 18–77 (KQENREARRRIDLNLDISPQRPRPTLQLPLANDGGSRSPSSESSPQHPTPPSRPRHMLGL). Residues 36-63 (PQRPRPTLQLPLANDGGSRSPSSESSPQ) are compositionally biased toward low complexity. Residues 37–57 (QRPRPTLQLPLANDGGSRSPS) form a d Domain region. The 261-residue stretch at 120-380 (LENLGEMGSG…YNKLLEHSFI (261 aa)) folds into the Protein kinase domain. ATP contacts are provided by residues 126 to 134 (MGSGTCGQV) and K149. Residue D243 is the Proton acceptor of the active site. Position 271 is a phosphoserine; by MAP3K (S271). T275 is modified (phosphothreonine; by MAP3K). Residues 377–400 (HSFIKHYETLEVDVASWFKDVMAK) are DVD domain. S411 bears the Phosphoserine mark.

This sequence belongs to the protein kinase superfamily. STE Ser/Thr protein kinase family. MAP kinase kinase subfamily. Interacts with VRK2. Interacts (via its D domain) with its substrates MAPK8/JNK1, MAPK9/JNK2 and MAPK10/JNK3. Interacts (via its DVD domain) with MAP3Ks activators like MAP3K5/ASK1 and MAP3K1/MEKK1. Interacts with MAPK8IP1/JIP1, MAPK8IP2/JIP2 and MAPK8IP3/JIP3 scaffold proteins. Interacts with RASSF7, the interaction promotes phosphorylation. Found in a complex with SH3RF1, RAC1, MAP3K11/MLK3, MAPK8IP1/JIP1 and MAPK8/JNK1. Found in a complex with SH3RF1, RAC2, MAP3K7/TAK1, MAPK8IP1/JIP1, MAPK8/JNK1 and MAPK9/JNK2. Mg(2+) is required as a cofactor. Post-translationally, activated by phosphorylation on Ser-271 and Thr-275 by MAP kinase kinase kinases (MAP3Ks).

The protein localises to the nucleus. It is found in the cytoplasm. The enzyme catalyses L-seryl-[protein] + ATP = O-phospho-L-seryl-[protein] + ADP + H(+). It catalyses the reaction L-threonyl-[protein] + ATP = O-phospho-L-threonyl-[protein] + ADP + H(+). It carries out the reaction L-tyrosyl-[protein] + ATP = O-phospho-L-tyrosyl-[protein] + ADP + H(+). With respect to regulation, activated by phosphorylation by specific MAP kinase kinase kinases such as MAP3K1/MEKK1, MAP3K3/MEKK3, MAP3K11/MLK3 and MAP3K12/DLK. Its function is as follows. Dual specificity protein kinase which acts as an essential component of the MAP kinase signal transduction pathway. Essential component of the stress-activated protein kinase/c-Jun N-terminal kinase (SAP/JNK) signaling pathway. With MAP2K4/MKK4, is the one of the only known kinase to directly activate the stress-activated protein kinase/c-Jun N-terminal kinases MAPK8/JNK1, MAPK9/JNK2 and MAPK10/JNK3. MAP2K4/MKK4 and MAP2K7/MKK7 both activate the JNKs by phosphorylation, but they differ in their preference for the phosphorylation site in the Thr-Pro-Tyr motif. MAP2K4/MKK4 shows preference for phosphorylation of the Tyr residue and MAP2K7/MKK7 for the Thr residue. The monophosphorylation of JNKs on the Thr residue is sufficient to increase JNK activity indicating that MAP2K7/MKK7 is important to trigger JNK activity, while the additional phosphorylation of the Tyr residue by MAP2K4/MKK4 ensures optimal JNK activation. Has a specific role in JNK signal transduction pathway activated by pro-inflammatory cytokines. The MKK/JNK signaling pathway is also involved in mitochondrial death signaling pathway, including the release cytochrome c, leading to apoptosis. Part of a non-canonical MAPK signaling pathway, composed of the upstream MAP3K12 kinase and downstream MAP kinases MAPK1/ERK2 and MAPK3/ERK1, that enhances the AP-1-mediated transcription of APP in response to APOE. In Rattus norvegicus (Rat), this protein is Dual specificity mitogen-activated protein kinase kinase 7.